The chain runs to 549 residues: Lipase 5 (549 aa).

The first 15 residues, 1–15, serve as a signal peptide directing secretion; that stretch reads MKLALALSLIASVAA. Cys75 and Cys112 are disulfide-bonded. Ser224 acts as the Acyl-ester intermediate in catalysis. Cys283 and Cys292 form a disulfide bridge. Asn329 carries an N-linked (GlcNAc...) asparagine glycan. Catalysis depends on Glu356, which acts as the Charge relay system. Asn366 carries N-linked (GlcNAc...) asparagine glycosylation. His464 acts as the Charge relay system in catalysis.

This sequence belongs to the type-B carboxylesterase/lipase family.

The catalysed reaction is a triacylglycerol + H2O = a diacylglycerol + a fatty acid + H(+). In Diutina rugosa (Yeast), this protein is Lipase 5 (LIP5).